The following is a 511-amino-acid chain: Exodeoxyribonuclease 7 large subunit (511 aa).

The protein belongs to the XseA family. In terms of assembly, heterooligomer composed of large and small subunits.

It is found in the cytoplasm. The catalysed reaction is Exonucleolytic cleavage in either 5'- to 3'- or 3'- to 5'-direction to yield nucleoside 5'-phosphates.. In terms of biological role, bidirectionally degrades single-stranded DNA into large acid-insoluble oligonucleotides, which are then degraded further into small acid-soluble oligonucleotides. The sequence is that of Exodeoxyribonuclease 7 large subunit from Brucella suis biovar 1 (strain 1330).